Consider the following 166-residue polypeptide: Eukaryotic translation initiation factor 5A (166 aa).

Lys52 carries the post-translational modification Hypusine. The interval 99 to 125 (DREDPSKPAHLSLMDDEGETRDNLDMP) is disordered.

Belongs to the eIF-5A family. Lys-52 undergoes hypusination, a unique post-translational modification that consists in the addition of a butylamino group from spermidine to lysine side chain, leading to the formation of the unusual amino acid hypusine. eIF-5As are the only known proteins to undergo this modification, which is essential for their function. Hypusination is mediated by the consecutive action of deoxyhypusine synthase DHSc and deoxyhypusine hydroxylase DOHH.

It is found in the cytoplasm. In terms of biological role, translation factor that promotes translation elongation and termination, particularly upon ribosome stalling at specific amino acid sequence contexts. Binds between the exit (E) and peptidyl (P) site of the ribosome and promotes rescue of stalled ribosome: specifically required for efficient translation of polyproline-containing peptides as well as other motifs that stall the ribosome. Acts as a ribosome quality control (RQC) cofactor by joining the RQC complex to facilitate peptidyl transfer during CAT tailing step. Required for cell growth during both bloodstream (BF) and insect procyclic (PF) life cycle stages and for survival of the bloodstream form. The sequence is that of Eukaryotic translation initiation factor 5A from Trypanosoma brucei brucei (strain 927/4 GUTat10.1).